We begin with the raw amino-acid sequence, 403 residues long: MSEKGRLFTSESVTEGHPDKICDAISDSVLDALLAADPRSRVAVETLVTTGQVHVVGEVTTSAKEAFADITNTVRARILEIGYDSSDKGFDGATCGVNIGIGAQSPDIAQGVDTAHEARVEGAADPLDSQGAGDQGLMFGYAINATPELMPLPIALAHRLSRRLTEVRKNGVLPYLRPDGKTQVTIAYEDNVPVQLDTVVISTQHAADIDLEKTLDPDIREKVLNTVLDDLAHETLDASTVRVLVNPTGKFVLGGPMGDAGLTGRKIIVDTYGGWARHGGGAFSGKDPSKVDRSAAYAMRWVAKNVVAAGLAERVEVQVAYAIGKAAPVGLFVETFGTETEDPVKIEKAIGEVFDLRPGAIIRDLNLLRPIYAPTAAYGHFGRTDVELPWEQLDKVDDLKRAI.

His17 provides a ligand contact to ATP. A Mg(2+)-binding site is contributed by Asp19. Glu45 is a binding site for K(+). 2 residues coordinate L-methionine: Glu58 and Gln104. Residues Gln104–Thr114 are flexible loop. ATP is bound by residues Asp179 to Lys181, Lys250 to Phe251, Asp259, Arg265 to Lys266, Ala282, and Lys286. Asp259 provides a ligand contact to L-methionine. An L-methionine-binding site is contributed by Lys290.

Belongs to the AdoMet synthase family. As to quaternary structure, homotetramer; dimer of dimers. The cofactor is Mg(2+). K(+) is required as a cofactor.

The protein resides in the cytoplasm. The enzyme catalyses L-methionine + ATP + H2O = S-adenosyl-L-methionine + phosphate + diphosphate. It participates in amino-acid biosynthesis; S-adenosyl-L-methionine biosynthesis; S-adenosyl-L-methionine from L-methionine: step 1/1. Its function is as follows. Catalyzes the formation of S-adenosylmethionine (AdoMet) from methionine and ATP. The overall synthetic reaction is composed of two sequential steps, AdoMet formation and the subsequent tripolyphosphate hydrolysis which occurs prior to release of AdoMet from the enzyme. The sequence is that of S-adenosylmethionine synthase from Mycobacterium bovis (strain BCG / Pasteur 1173P2).